Reading from the N-terminus, the 163-residue chain is MSGFIQAAKSLLLLEFVSAFFLAMRQFFSPKPTINYPYEKGFVSQRFRGEHALRRYPNGEERCIACKLCEAICPAQAITIEAGPRRNDGTRRTVRYDIDMVKCIYCGFCQEACPVEAIVEGPNFEFATETREELYYDKEKLLMNGDRWEREIARNILMDAPYR.

4Fe-4S ferredoxin-type domains are found at residues 53–83 (LRRY…IEAG) and 94–123 (VRYD…EGPN). [4Fe-4S] cluster-binding residues include Cys63, Cys66, Cys69, Cys73, Cys103, Cys106, Cys109, and Cys113.

This sequence belongs to the complex I 23 kDa subunit family. In terms of assembly, NDH-1 is composed of 14 different subunits. Subunits NuoA, H, J, K, L, M, N constitute the membrane sector of the complex. Requires [4Fe-4S] cluster as cofactor.

Its subcellular location is the cell inner membrane. The enzyme catalyses a quinone + NADH + 5 H(+)(in) = a quinol + NAD(+) + 4 H(+)(out). Its function is as follows. NDH-1 shuttles electrons from NADH, via FMN and iron-sulfur (Fe-S) centers, to quinones in the respiratory chain. The immediate electron acceptor for the enzyme in this species is believed to be ubiquinone. Couples the redox reaction to proton translocation (for every two electrons transferred, four hydrogen ions are translocated across the cytoplasmic membrane), and thus conserves the redox energy in a proton gradient. This Bartonella tribocorum (strain CIP 105476 / IBS 506) protein is NADH-quinone oxidoreductase subunit I.